Reading from the N-terminus, the 134-residue chain is Large-conductance mechanosensitive channel (134 aa).

2 helical membrane-spanning segments follow: residues 15–35 (IDLA…QSVV) and 80–100 (GNFI…FLAV).

The protein belongs to the MscL family. In terms of assembly, homopentamer.

It localises to the cell inner membrane. Channel that opens in response to stretch forces in the membrane lipid bilayer. May participate in the regulation of osmotic pressure changes within the cell. This is Large-conductance mechanosensitive channel from Methylocella silvestris (strain DSM 15510 / CIP 108128 / LMG 27833 / NCIMB 13906 / BL2).